The chain runs to 1477 residues: Alpha-1-inhibitor 3 (1477 aa).

Residues 1–24 (MKKDREAQLCLFSALLAFLPFASL) form the signal peptide. An intrachain disulfide couples Cys48 to Cys86. N-linked (GlcNAc...) asparagine glycosylation is found at Asn55 and Asn247. 2 cysteine pairs are disulfide-bonded: Cys251/Cys295 and Cys269/Cys283. Residues Asn301, Asn321, Asn393, and Asn508 are each glycosylated (N-linked (GlcNAc...) asparagine). 3 disulfides stabilise this stretch: Cys468–Cys563, Cys595–Cys774, and Cys643–Cys678. The segment at 601–750 (DQSVLLQKPE…TWIWDLVTVN (150 aa)) is bait region (approximate). N-linked (GlcNAc...) asparagine glycans are attached at residues Asn750, Asn777, and Asn872. 4 disulfide bridges follow: Cys850-Cys886, Cys924-Cys1324, Cys1082-Cys1130, and Cys1355-Cys1470. The segment at residues 975-978 (CGEQ) is a cross-link (isoglutamyl cysteine thioester (Cys-Gln)). N-linked (GlcNAc...) asparagine glycosylation occurs at Asn994. 3 N-linked (GlcNAc...) asparagine glycosylation sites follow: Asn1143, Asn1314, and Asn1427.

This sequence belongs to the protease inhibitor I39 (alpha-2-macroglobulin) family. In terms of assembly, monomer.

The protein localises to the secreted. In terms of biological role, protease inhibitor with a wide spectrum of protein targets, which attaches through its thioester function. This is Alpha-1-inhibitor 3 (A1i3) from Rattus norvegicus (Rat).